A 1451-amino-acid chain; its full sequence is Copper-transporting ATPase 2 (1451 aa).

Topologically, residues 1–646 are cytoplasmic; sequence MPEQERKVTA…KTEIKQWKKS (646 aa). HMA domains are found at residues 57-123, 142-208, and 256-322; these read TTGV…FEAS, AVVK…FEAA, and ATLP…PGYF. Positions 68, 71, 153, 156, 267, and 270 each coordinate Cu(+). The interval 328 to 353 is disordered; it reads DGLEKESGSSSVPSLGSSQRQQEPGP. Over residues 335-345 the composition is skewed to low complexity; the sequence is GSSSVPSLGSS. One can recognise an HMA 4 domain in the interval 355 to 421; the sequence is RTAVLTITGI…AVEDMGFEVS (67 aa). 3 positions are modified to phosphoserine: S469, S471, and S474. 2 consecutive HMA domains span residues 481–547 and 557–623; these read QKCF…FEAA and GDIE…FHAS. C492, C495, C568, and C571 together coordinate Cu(+). Residues 647 to 668 form a helical membrane-spanning segment; sequence FLCSLVFGIPVMGLMIYMLIPS. Topologically, residues 669-690 are extracellular; it reads SKPHETMVLDHNIIPGLSVLNL. Residues 691-710 traverse the membrane as a helical segment; that stretch reads IFFILCTFVQFLGGWYFYVQ. At 711 to 717 the chain is on the cytoplasmic side; it reads AYKSLRH. A helical transmembrane segment spans residues 718–738; the sequence is KSANMDVLIVLATTIAYAYSL. The Extracellular segment spans residues 739 to 757; it reads VILVVAIAEKAEKSPVTFF. A helical transmembrane segment spans residues 758 to 778; sequence DTPPMLFVFIALGRWLEHVAK. Residues 779-912 lie on the Cytoplasmic side of the membrane; sequence SKTSEALAKL…KAPIQQLADR (134 aa). Residues 913 to 935 form a helical membrane-spanning segment; it reads FSGYFVPFIIIISTLTLVVWIII. At 936–965 the chain is on the extracellular side; it reads GFVDFGIVQKYFPSPSKHISQTEVIIRFAF. A helical transmembrane segment spans residues 966 to 987; the sequence is QTSITVLCIACPCSLGLATPTA. Residues 988 to 1310 are Cytoplasmic-facing; sequence VMVGTGVAAQ…LSKRTVRRIR (323 aa). The 4-aspartylphosphate intermediate role is filled by D1020. Mg(2+) is bound by residues D1255 and D1259. Residues 1311-1328 form a helical membrane-spanning segment; the sequence is VNLVLALIYNMVGIPIAA. Residues 1329–1339 are Extracellular-facing; the sequence is GVFMPIGIVLQ. The chain crosses the membrane as a helical span at residues 1340–1357; the sequence is PWMGSAAASSVSVVLSSL. Residues 1358–1451 lie on the Cytoplasmic side of the membrane; it reads QLKCYRKPDL…LSDRDEEQCI (94 aa). Phosphoserine occurs at positions 1384 and 1443.

It belongs to the cation transport ATPase (P-type) (TC 3.A.3) family. Type IB subfamily. Monomer. Interacts with COMMD1/MURR1. Interacts with DCTN4, in a copper-dependent manner. Interacts with ATOX1. Interacts (via C-terminus) with ZBTB16/PLZF. As to expression, expressed in brain, liver, kidney, spleen and stomach. In brain, detected in neuronal cells of the hippocampal formation, olfactory bulbs, cerebellum, cerebral cortex and nuclei in the brainstem. Isoform PINA is expressed during night in adult pineal gland (pinealocytes) and retina. Isoform PINA is not detected in other tissue.

It is found in the golgi apparatus. The protein localises to the trans-Golgi network membrane. The protein resides in the late endosome. It carries out the reaction Cu(+)(in) + ATP + H2O = Cu(+)(out) + ADP + phosphate + H(+). Copper ion transmembrane transporter involved in the export of copper out of the cells, such as the efflux of hepatic copper into the bile. The protein is Copper-transporting ATPase 2 (Atp7b) of Rattus norvegicus (Rat).